Here is a 239-residue protein sequence, read N- to C-terminus: 2-C-methyl-D-erythritol 4-phosphate cytidylyltransferase (239 aa).

The protein belongs to the IspD/TarI cytidylyltransferase family. IspD subfamily.

The catalysed reaction is 2-C-methyl-D-erythritol 4-phosphate + CTP + H(+) = 4-CDP-2-C-methyl-D-erythritol + diphosphate. It functions in the pathway isoprenoid biosynthesis; isopentenyl diphosphate biosynthesis via DXP pathway; isopentenyl diphosphate from 1-deoxy-D-xylulose 5-phosphate: step 2/6. Its function is as follows. Catalyzes the formation of 4-diphosphocytidyl-2-C-methyl-D-erythritol from CTP and 2-C-methyl-D-erythritol 4-phosphate (MEP). This chain is 2-C-methyl-D-erythritol 4-phosphate cytidylyltransferase, found in Ruthia magnifica subsp. Calyptogena magnifica.